A 348-amino-acid chain; its full sequence is CCAAT/enhancer-binding protein beta (348 aa).

Positions 1–24 (MQRLVVWDPVCLPLPPPPPAFKSM) are required for Lys-174 sumoylation. The residue at position 3 (Arg-3) is an Asymmetric dimethylarginine; by CARM1. A required for MYC transcriptional repression region spans residues 24-135 (MEVANFYYEA…YGGKNCKKAA (112 aa)). N6-acetyllysine; alternate is present on Lys-43. N6-methylated lysine; alternate is present on Lys-43. Disordered regions lie at residues 44–65 (AAPAAPPADRPGPRPPTGELGS) and 79–112 (LEPLGAPQAPAPTTASDTFEAAPSAPAPVPASSG). A compositionally biased stretch (pro residues) spans 47-59 (AAPPADRPGPRPP). The short motif at 116–124 (DFLSDLFSD) is the 9aaTAD element. Residues Lys-129 and Lys-132 each carry the N6-acetyllysine; by KAT2A and KAT2B modification. Position 133 is an N6-acetyllysine; by KAT2A and KAT2B; alternate (Lys-133). Lys-133 is covalently cross-linked (Glycyl lysine isopeptide (Lys-Gly) (interchain with G-Cter in SUMO2); alternate). The tract at residues 158-178 (APLHPPPPPPPPPAELKAEPG) is disordered. Positions 160-171 (LHPPPPPPPPPA) are enriched in pro residues. Residue Lys-174 forms a Glycyl lysine isopeptide (Lys-Gly) (interchain with G-Cter in SUMO2); alternate linkage. Lys-174 participates in a covalent cross-link: Glycyl lysine isopeptide (Lys-Gly) (interchain with G-Cter in SUMO); alternate. Glycyl lysine isopeptide (Lys-Gly) (interchain with G-Cter in SUMO2) cross-links involve residues Lys-185 and Lys-187. Positions 219–259 (SGSSGSLSTSSSSSPPGTPSPADAKATPAAAACYAGAAPAP) are enriched in low complexity. A disordered region spans residues 219-277 (SGSSGSLSTSSSSSPPGTPSPADAKATPAAAACYAGAAPAPSQVKSKAKKTVDKHSDEY). Position 227 is a phosphothreonine; by GSK3-beta (Thr-227). 2 O-linked (GlcNAc) serine glycosylation sites follow: Ser-228 and Ser-229. A Phosphoserine; by GSK3-beta modification is found at Ser-232. Phosphothreonine; by RPS6KA1, CDK2 and MAPK is present on Thr-236. Glycyl lysine isopeptide (Lys-Gly) (interchain with G-Cter in SUMO2) cross-links involve residues Lys-263 and Lys-265. Positions 268 to 277 (KTVDKHSDEY) are enriched in basic and acidic residues. Thr-269 is subject to Phosphothreonine; by RPS6KA1 and PKC/PRKCA. The bZIP domain occupies 274–337 (SDEYKIRRER…STLRNLFKTL (64 aa)). Residues 278–298 (KIRRERNNIAVRKSRDKAKMR) are basic motif. Ser-291 carries the post-translational modification Phosphoserine; by PKC/PRKCA. Positions 300-307 (LETQHKVL) are leucine-zipper. Ser-328 is subject to Phosphoserine; by CaMK2. A Glycyl lysine isopeptide (Lys-Gly) (interchain with G-Cter in SUMO2) cross-link involves residue Lys-335.

This sequence belongs to the bZIP family. C/EBP subfamily. Binds DNA as a homodimer and as a heterodimer. Interacts with ATF4. Binds DNA as a heterodimer with ATF4. Interacts with MYB; within the complex, MYB and CEBPB bind to different promoter regions. Can form stable heterodimers with CEBPA, CEBPD and CEBPG. Interacts with SIX1. Interacts with TRIM28 and PTGES2. Interacts with PRDM16. Interacts with CCDC85B. Forms a complex with THOC5. Interacts with ZNF638; this interaction increases transcriptional activation. Interacts with CIDEA and CIDEC; these interactions increase transcriptional activation of a subset of CEBPB downstream target genes. Interacts with DDIT3/CHOP. Interacts with EP300; recruits EP300 to chromatin. Interacts with RORA; the interaction disrupts interaction with EP300. Interacts (not methylated) with MED23, MED26, SMARCA2, SMARCB1 and SMARCC1. Interacts with KAT2A and KAT2B. Interacts with ATF5; EP300 is required for ATF5 and CEBPB interaction and DNA binding. Interacts with NFE2L1; the heterodimer represses expression of DSPP during odontoblast differentiation. In terms of processing, methylated. Methylation at Arg-3 by CARM1 and at Lys-43 by EHMT2 inhibit transactivation activity. Methylation is probably inhibited by phosphorylation at Thr-236. Sumoylated by polymeric chains of SUMO2 or SUMO3. Sumoylation at Lys-174 is required for inhibition of T-cells proliferation. In adipocytes, sumoylation at Lys-174 by PIAS1 leads to ubiquitination and subsequent proteasomal degradation. Desumoylated by SENP2, which abolishes ubiquitination and stabilizes protein levels. Post-translationally, ubiquitinated, leading to proteasomal degradation. In terms of processing, phosphorylated at Thr-236 by MAPK and CDK2, serves to prime phosphorylation at Thr-227 and Ser-232 by GSK3B and acquire DNA-binding as well as transactivation activities, required to induce adipogenesis. MAPK and CDK2 act sequentially to maintain Thr-236 in the primed phosphorylated state during mitotical cloning expansion and thereby progression of terminal differentiation. Phosphorylation at Thr-269 enhances transactivation activity. Phosphorylation at Ser-328 in response to calcium increases transactivation activity. Phosphorylated at Thr-236 by RPS6KA1. O-glycosylated, glycosylation at Ser-228 and Ser-229 prevents phosphorylation on Thr-236, Ser-232 and Thr-227 and DNA binding activity which delays the adipocyte differentiation program. Post-translationally, acetylated. Acetylation at Lys-43 is an important and dynamic regulatory event that contributes to its ability to transactivate target genes, including those associated with adipogenesis and adipocyte function. Deacetylation by HDAC1 represses its transactivation activity. Acetylated by KAT2A and KAT2B within a cluster of lysine residues between amino acids 129-133, this acetylation is strongly induced by glucocorticoid treatment and enhances transactivation activity.

The protein resides in the nucleus. It localises to the cytoplasm. Functionally, important transcription factor regulating the expression of genes involved in immune and inflammatory responses. Also plays a significant role in adipogenesis, as well as in the gluconeogenic pathway, liver regeneration, and hematopoiesis. The consensus recognition site is 5'-T[TG]NNGNAA[TG]-3'. Its functional capacity is governed by protein interactions and post-translational protein modifications. During early embryogenesis, plays essential and redundant roles with CEBPA. Has a promitotic effect on many cell types such as hepatocytes and adipocytes but has an antiproliferative effect on T-cells by repressing MYC expression, facilitating differentiation along the T-helper 2 lineage. Binds to regulatory regions of several acute-phase and cytokines genes and plays a role in the regulation of acute-phase reaction and inflammation. Also plays a role in intracellular bacteria killing. During adipogenesis, is rapidly expressed and, after activation by phosphorylation, induces CEBPA and PPARG, which turn on the series of adipocyte genes that give rise to the adipocyte phenotype. The delayed transactivation of the CEBPA and PPARG genes by CEBPB appears necessary to allow mitotic clonal expansion and thereby progression of terminal differentiation. Essential for female reproduction because of a critical role in ovarian follicle development. Restricts osteoclastogenesis: together with NFE2L1; represses expression of DSPP during odontoblast differentiation. This chain is CCAAT/enhancer-binding protein beta (CEBPB), found in Bos taurus (Bovine).